A 346-amino-acid chain; its full sequence is Annexin A1 (346 aa).

Alanine 2 carries the post-translational modification N-acetylalanine. A Phosphoserine; by TRPM7 modification is found at serine 5. Residue glutamine 19 forms an Isoglutamyl lysine isopeptide (Gln-Lys) (interchain with K-?) linkage. At tyrosine 21 the chain carries Phosphotyrosine; by EGFR. A phosphoserine mark is found at serine 34 and serine 37. A Phosphothreonine modification is found at threonine 41. 4 Annexin repeats span residues phenylalanine 42–lysine 113, threonine 114–lysine 185, aspartate 197–lysine 269, and serine 273–glycine 344. N6-acetyllysine is present on lysine 58. Positions 59, 60, 62, 97, 100, 105, 127, 129, 131, 132, and 134 each coordinate Ca(2+). Threonine 136 carries the phosphothreonine modification. Ca(2+) contacts are provided by aspartate 171, glycine 210, and arginine 213. Lysine 214 is covalently cross-linked (Glycyl lysine isopeptide (Lys-Gly) (interchain with G-Cter in SUMO1); alternate). Lysine 214 is covalently cross-linked (Glycyl lysine isopeptide (Lys-Gly) (interchain with G-Cter in SUMO2); alternate). Glycine 215 is a Ca(2+) binding site. N6-acetyllysine is present on lysine 239. Ca(2+) is bound by residues aspartate 253, glutamate 255, and leucine 256. Lysine 257 participates in a covalent cross-link: Glycyl lysine isopeptide (Lys-Gly) (interchain with G-Cter in SUMO1). 4 residues coordinate Ca(2+): glutamate 261, methionine 286, glycine 288, and glycine 290. N6-acetyllysine is present on lysine 312. Cysteine 324 and cysteine 343 are oxidised to a cystine. Residues leucine 328, glutamate 330, and threonine 331 each contribute to the Ca(2+) site. Lysine 332 participates in a covalent cross-link: Glycyl lysine isopeptide (Lys-Gly) (interchain with G-Cter in SUMO1). Glutamate 336 contributes to the Ca(2+) binding site.

This sequence belongs to the annexin family. Homodimer; non-covalently linked. Homodimer; linked by transglutamylation. Homodimers linked by transglutamylation are observed in placenta, but not in other tissues. Interacts with S100A11. Heterotetramer, formed by two molecules each of S100A11 and ANXA1. Interacts with DYSF. Interacts with EGFR. In terms of processing, phosphorylated by protein kinase C, EGFR and TRPM7. Phosphorylated in response to EGF treatment. Post-translationally, sumoylated. Proteolytically cleaved by cathepsin CTSG to release the active N-terminal peptide Ac2-26. Detected on surface epithelia and mucosal glands in nasal cavity, trachea, bronchi and bronchioles. Detected in blood vessel endothelial cells. Detected in neutrophils (at protein level).

Its subcellular location is the nucleus. It is found in the cytoplasm. The protein resides in the cell projection. It localises to the cilium. The protein localises to the basolateral cell membrane. Its subcellular location is the lateral cell membrane. It is found in the cell membrane. The protein resides in the apical cell membrane. It localises to the membrane. The protein localises to the endosome membrane. Its subcellular location is the secreted. It is found in the extracellular space. The protein resides in the early endosome. It localises to the cytoplasmic vesicle membrane. The protein localises to the extracellular exosome. Its subcellular location is the cytoplasmic vesicle. It is found in the secretory vesicle lumen. The protein resides in the phagocytic cup. Its function is as follows. Plays important roles in the innate immune response as effector of glucocorticoid-mediated responses and regulator of the inflammatory process. Has anti-inflammatory activity. Plays a role in glucocorticoid-mediated down-regulation of the early phase of the inflammatory response. Contributes to the adaptive immune response by enhancing signaling cascades that are triggered by T-cell activation, regulates differentiation and proliferation of activated T-cells. Promotes the differentiation of T-cells into Th1 cells and negatively regulates differentiation into Th2 cells. Has no effect on unstimulated T-cells. Negatively regulates hormone exocytosis via activation of the formyl peptide receptors and reorganization of the actin cytoskeleton. Has high affinity for Ca(2+) and can bind up to eight Ca(2+) ions. Displays Ca(2+)-dependent binding to phospholipid membranes. Plays a role in the formation of phagocytic cups and phagosomes. Plays a role in phagocytosis by mediating the Ca(2+)-dependent interaction between phagosomes and the actin cytoskeleton. Functions at least in part by activating the formyl peptide receptors and downstream signaling cascades. Promotes chemotaxis of granulocytes and monocytes via activation of the formyl peptide receptors. Promotes rearrangement of the actin cytoskeleton, cell polarization and cell migration. Promotes resolution of inflammation and wound healing. Acts via neutrophil N-formyl peptide receptors to enhance the release of CXCL2. The protein is Annexin A1 (ANXA1) of Bos taurus (Bovine).